Consider the following 862-residue polypeptide: Leucine--tRNA ligase (862 aa).

The 'HIGH' region signature appears at 42 to 52; it reads PYPSGRLHMGH. Residues 622 to 626 carry the 'KMSKS' region motif; that stretch reads KMSKS. K625 contributes to the ATP binding site.

Belongs to the class-I aminoacyl-tRNA synthetase family.

Its subcellular location is the cytoplasm. It carries out the reaction tRNA(Leu) + L-leucine + ATP = L-leucyl-tRNA(Leu) + AMP + diphosphate. This Vibrio campbellii (strain ATCC BAA-1116) protein is Leucine--tRNA ligase.